Consider the following 250-residue polypeptide: Probable septum site-determining protein MinC (250 aa).

The segment at Ser110–Pro143 is disordered. Positions Ala112–Glu128 are enriched in basic and acidic residues. The segment covering Pro129 to Glu138 has biased composition (pro residues).

The protein belongs to the MinC family. In terms of assembly, interacts with MinD and FtsZ.

Its function is as follows. Cell division inhibitor that blocks the formation of polar Z ring septums. Rapidly oscillates between the poles of the cell to destabilize FtsZ filaments that have formed before they mature into polar Z rings. Prevents FtsZ polymerization. The sequence is that of Probable septum site-determining protein MinC from Pseudomonas putida (strain ATCC 47054 / DSM 6125 / CFBP 8728 / NCIMB 11950 / KT2440).